A 277-amino-acid chain; its full sequence is Large ribosomal subunit protein uL2 (277 aa).

The interval 222–277 (GVAMNPVDHPHGGGEGRTSGGRHPVSPWGKPTKGKRTRSNKATDKFIMRTRHQRKK) is disordered.

The protein belongs to the universal ribosomal protein uL2 family. Part of the 50S ribosomal subunit. Forms a bridge to the 30S subunit in the 70S ribosome.

Its function is as follows. One of the primary rRNA binding proteins. Required for association of the 30S and 50S subunits to form the 70S ribosome, for tRNA binding and peptide bond formation. It has been suggested to have peptidyltransferase activity; this is somewhat controversial. Makes several contacts with the 16S rRNA in the 70S ribosome. The protein is Large ribosomal subunit protein uL2 of Bartonella tribocorum (strain CIP 105476 / IBS 506).